Consider the following 176-residue polypeptide: Inner membrane-spanning protein YciB (176 aa).

5 consecutive transmembrane segments (helical) span residues 24-44 (TATAVAIVATLVQIAWVAFRH), 49-69 (PMLWVSLGVVTVFGGATLVLH), 76-96 (WKPTVLYWAFSVALIVSQLAF), 119-139 (LNVVWGVFFVLLGLVNLFVAY), and 149-169 (FKLFGATGCLVVFIVGQSLWL).

Belongs to the YciB family.

The protein localises to the cell inner membrane. In terms of biological role, plays a role in cell envelope biogenesis, maintenance of cell envelope integrity and membrane homeostasis. In Paraburkholderia xenovorans (strain LB400), this protein is Inner membrane-spanning protein YciB.